The primary structure comprises 292 residues: Glycine--tRNA ligase alpha subunit (292 aa).

The protein belongs to the class-II aminoacyl-tRNA synthetase family. In terms of assembly, tetramer of two alpha and two beta subunits.

It localises to the cytoplasm. It catalyses the reaction tRNA(Gly) + glycine + ATP = glycyl-tRNA(Gly) + AMP + diphosphate. The chain is Glycine--tRNA ligase alpha subunit from Synechococcus sp. (strain ATCC 27144 / PCC 6301 / SAUG 1402/1) (Anacystis nidulans).